We begin with the raw amino-acid sequence, 179 residues long: Large ribosomal subunit protein uL6 (179 aa).

This sequence belongs to the universal ribosomal protein uL6 family. In terms of assembly, part of the 50S ribosomal subunit.

This protein binds to the 23S rRNA, and is important in its secondary structure. It is located near the subunit interface in the base of the L7/L12 stalk, and near the tRNA binding site of the peptidyltransferase center. In Spiroplasma citri, this protein is Large ribosomal subunit protein uL6.